We begin with the raw amino-acid sequence, 302 residues long: uncharacterized protein (302 aa).

Disordered regions lie at residues 81 to 100 (ETSDWDSPASPPVTGAERAA), 155 to 209 (TVTG…PVNP), and 269 to 302 (LRIESGSSPGKRPLDDPDEVPSSKRGPSRRALLN). Positions 196-209 (PSLPSSLVSSPVNP) are enriched in low complexity.

This is an uncharacterized protein from Ictalurid herpesvirus 1 (strain Auburn) (IcHV-1).